The chain runs to 337 residues: Protein-arginine kinase (337 aa).

Positions isoleucine 12–glutamine 240 constitute a Phosphagen kinase C-terminal domain. ATP-binding positions include alanine 15–lysine 19, arginine 162–phenylalanine 166, and lysine 193–serine 198.

This sequence belongs to the ATP:guanido phosphotransferase family.

It carries out the reaction L-arginyl-[protein] + ATP = N(omega)-phospho-L-arginyl-[protein] + ADP + H(+). Its function is as follows. Catalyzes the specific phosphorylation of arginine residues in proteins. The polypeptide is Protein-arginine kinase (Clostridium perfringens (strain 13 / Type A)).